Reading from the N-terminus, the 74-residue chain is Large ribosomal subunit protein bL31 (74 aa).

The protein belongs to the bacterial ribosomal protein bL31 family. Type A subfamily. Part of the 50S ribosomal subunit.

Its function is as follows. Binds the 23S rRNA. In Phenylobacterium zucineum (strain HLK1), this protein is Large ribosomal subunit protein bL31.